The sequence spans 525 residues: Light-independent protochlorophyllide reductase subunit B (525 aa).

A [4Fe-4S] cluster-binding site is contributed by Asp36. Asp286 serves as the catalytic Proton donor. A substrate-binding site is contributed by 421–422; that stretch reads GL.

Belongs to the ChlB/BchB/BchZ family. As to quaternary structure, protochlorophyllide reductase is composed of three subunits; ChlL, ChlN and ChlB. Forms a heterotetramer of two ChlB and two ChlN subunits. The cofactor is [4Fe-4S] cluster.

It carries out the reaction chlorophyllide a + oxidized 2[4Fe-4S]-[ferredoxin] + 2 ADP + 2 phosphate = protochlorophyllide a + reduced 2[4Fe-4S]-[ferredoxin] + 2 ATP + 2 H2O. The protein operates within porphyrin-containing compound metabolism; chlorophyll biosynthesis (light-independent). In terms of biological role, component of the dark-operative protochlorophyllide reductase (DPOR) that uses Mg-ATP and reduced ferredoxin to reduce ring D of protochlorophyllide (Pchlide) to form chlorophyllide a (Chlide). This reaction is light-independent. The NB-protein (ChlN-ChlB) is the catalytic component of the complex. The sequence is that of Light-independent protochlorophyllide reductase subunit B from Prochlorococcus marinus (strain NATL2A).